A 489-amino-acid chain; its full sequence is Probable 26S proteasome non-ATPase regulatory subunit 3 (489 aa).

The segment at 1–23 (MTQDVEMKEVPAPAPSNSVTAAT) is disordered. The PCI domain occupies 241–422 (CRYLFYLGKI…GWMVSKETGD (182 aa)). The disordered stretch occupies residues 454 to 489 (PANSHKDKESAEKRRERQQQEQELAKHIAEEDDDEF). The span at 457–482 (SHKDKESAEKRRERQQQEQELAKHIA) shows a compositional bias: basic and acidic residues.

Belongs to the proteasome subunit S3 family. The 26S proteasome is composed of a core protease, known as the 20S proteasome, capped at one or both ends by the 19S regulatory complex (RC). The RC is composed of at least 18 different subunits in two subcomplexes, the base and the lid, which form the portions proximal and distal to the 20S proteolytic core, respectively.

Its subcellular location is the nucleus. Acts as a regulatory subunit of the 26 proteasome which is involved in the ATP-dependent degradation of ubiquitinated proteins. In Daucus carota (Wild carrot), this protein is Probable 26S proteasome non-ATPase regulatory subunit 3 (21D7).